Reading from the N-terminus, the 411-residue chain is Glucose-1-phosphate adenylyltransferase (411 aa).

Alpha-D-glucose 1-phosphate contacts are provided by residues G161, 176 to 177, and S195; that span reads EK.

Belongs to the bacterial/plant glucose-1-phosphate adenylyltransferase family. As to quaternary structure, homotetramer.

The catalysed reaction is alpha-D-glucose 1-phosphate + ATP + H(+) = ADP-alpha-D-glucose + diphosphate. Its pathway is glycan biosynthesis; glycogen biosynthesis. Functionally, involved in the biosynthesis of ADP-glucose, a building block required for the elongation reactions to produce glycogen. Catalyzes the reaction between ATP and alpha-D-glucose 1-phosphate (G1P) to produce pyrophosphate and ADP-Glc. This chain is Glucose-1-phosphate adenylyltransferase, found in Anaeromyxobacter sp. (strain Fw109-5).